Reading from the N-terminus, the 184-residue chain is Ribosome-recycling factor (184 aa).

This sequence belongs to the RRF family.

It localises to the cytoplasm. Responsible for the release of ribosomes from messenger RNA at the termination of protein biosynthesis. May increase the efficiency of translation by recycling ribosomes from one round of translation to another. The polypeptide is Ribosome-recycling factor (Fervidobacterium nodosum (strain ATCC 35602 / DSM 5306 / Rt17-B1)).